Here is a 763-residue protein sequence, read N- to C-terminus: Formin-like protein 4 (763 aa).

Positions 1–33 (MAAMLMQPWPPFLPHLTLVFLTLILFFPNQSFS) are cleaved as a signal peptide. The disordered stretch occupies residues 52–73 (PPVQSPVLSPPQNPSSSSSDSD). Residues 80–100 (AVLITAASTLLVAAVFFFLVH) form a helical membrane-spanning segment. 2 disordered regions span residues 185-327 (IYSK…DSDH) and 726-763 (RSSMGSTQQRNAVKFPVLPPNFMSDRSRSDSGGSDSDM). Residues 205 to 225 (RSSTSHSVIHNDNYRNATTTH) show a composition bias toward polar residues. Positions 229 to 238 (VKTDSFEFVK) are enriched in basic and acidic residues. Pro residues predominate over residues 240–280 (DPTPPPPPPPPIPVKQSATPPPPPPPKLKNNGPSPPPPPPL). Over residues 281 to 292 (KKTAALSSSASK) the composition is skewed to low complexity. The 436-residue stretch at 303–738 (SGESSNGQVK…MGSTQQRNAV (436 aa)) folds into the FH2 domain. Over residues 316-327 (LHWDKVNPDSDH) the composition is skewed to basic and acidic residues. The span at 726 to 736 (RSSMGSTQQRN) shows a compositional bias: polar residues.

Belongs to the formin-like family. Class-I subfamily. Interacts with profilin. In terms of tissue distribution, expressed in the whole plant (at protein level).

It is found in the cell membrane. Might be involved in the organization and polarity of the actin cytoskeleton. This chain is Formin-like protein 4 (FH4), found in Arabidopsis thaliana (Mouse-ear cress).